The sequence spans 482 residues: UDP-N-acetylmuramate--L-alanine ligase (482 aa).

129 to 135 contributes to the ATP binding site; it reads GTHGKTT.

It belongs to the MurCDEF family.

Its subcellular location is the cytoplasm. The catalysed reaction is UDP-N-acetyl-alpha-D-muramate + L-alanine + ATP = UDP-N-acetyl-alpha-D-muramoyl-L-alanine + ADP + phosphate + H(+). Its pathway is cell wall biogenesis; peptidoglycan biosynthesis. Cell wall formation. The sequence is that of UDP-N-acetylmuramate--L-alanine ligase from Acinetobacter baylyi (strain ATCC 33305 / BD413 / ADP1).